Reading from the N-terminus, the 521-residue chain is Protein YjiT (521 aa).

The polypeptide is Protein YjiT (yjiT) (Escherichia coli (strain K12)).